We begin with the raw amino-acid sequence, 102 residues long: MYAIIVTGGKQYKVEEGASIYVEKLDAKEGDKVTFDQVIFVGGDDTKIGTPVVDGASVEGTVDKQGKEKKVVTFKYKPKKHTHTKQGHRQPYTKVTINKINA.

The segment covering 77-88 (KPKKHTHTKQGH) has biased composition (basic residues). The tract at residues 77 to 102 (KPKKHTHTKQGHRQPYTKVTINKINA) is disordered. A compositionally biased stretch (polar residues) spans 93-102 (TKVTINKINA).

It belongs to the bacterial ribosomal protein bL21 family. As to quaternary structure, part of the 50S ribosomal subunit. Contacts protein L20.

Its function is as follows. This protein binds to 23S rRNA in the presence of protein L20. This is Large ribosomal subunit protein bL21 from Limosilactobacillus reuteri (strain DSM 20016) (Lactobacillus reuteri).